A 135-amino-acid polypeptide reads, in one-letter code: Small ribosomal subunit protein uS12 (135 aa).

Residues 1–20 are disordered; the sequence is MPTINQLVRKGRHSKVTKSK. Residues 9–18 are compositionally biased toward basic residues; the sequence is RKGRHSKVTK. At Asp102 the chain carries 3-methylthioaspartic acid.

This sequence belongs to the universal ribosomal protein uS12 family. As to quaternary structure, part of the 30S ribosomal subunit. Contacts proteins S8 and S17. May interact with IF1 in the 30S initiation complex.

Functionally, with S4 and S5 plays an important role in translational accuracy. In terms of biological role, interacts with and stabilizes bases of the 16S rRNA that are involved in tRNA selection in the A site and with the mRNA backbone. Located at the interface of the 30S and 50S subunits, it traverses the body of the 30S subunit contacting proteins on the other side and probably holding the rRNA structure together. The combined cluster of proteins S8, S12 and S17 appears to hold together the shoulder and platform of the 30S subunit. In Lactobacillus helveticus (strain DPC 4571), this protein is Small ribosomal subunit protein uS12.